We begin with the raw amino-acid sequence, 100 residues long: Large ribosomal subunit protein uL23 (100 aa).

This sequence belongs to the universal ribosomal protein uL23 family. As to quaternary structure, part of the 50S ribosomal subunit. Contacts protein L29, and trigger factor when it is bound to the ribosome.

Functionally, one of the early assembly proteins it binds 23S rRNA. One of the proteins that surrounds the polypeptide exit tunnel on the outside of the ribosome. Forms the main docking site for trigger factor binding to the ribosome. This chain is Large ribosomal subunit protein uL23, found in Prochlorococcus marinus (strain MIT 9301).